Consider the following 331-residue polypeptide: MMFPSLLAPPAVYPNLLRPTPTLTLPQSIQTALSNHTSFLIEDLIRISRPAGFLPRAVPPPSMSPPTSESPNCMSETSDLARREGPNQTSISSNNSSPFLKFGVNAILSSSPRTESAQVLLPSAHPKPFTFPYFEGSFQPFIRSSYFPASSSVVPIPGTFSWPLVARGKPRRGMLRRAVFSDVQRKALEKMFQKQKYISKPDRKKLAGKLGLKDSQVKIWFQNRRMKWRNSKERELLSSGGCREQTLPTKFNPHPDLSDVSKKSSGEGEEEPLCPGNSPAHALPYQCPEHHLRLDTQLPSSPFNSSSASKPSDFSDSEEEGGEQEEEITVS.

Disordered stretches follow at residues 56-94 (RAVP…ISSN) and 232-331 (KERE…ITVS). A DNA-binding region (homeobox) is located at residues 173-232 (GMLRRAVFSDVQRKALEKMFQKQKYISKPDRKKLAGKLGLKDSQVKIWFQNRRMKWRNSK). The segment covering 256 to 266 (DLSDVSKKSSG) has biased composition (basic and acidic residues). Residues 299-314 (PSSPFNSSSASKPSDF) show a composition bias toward low complexity. Acidic residues predominate over residues 315–331 (SDSEEEGGEQEEEITVS).

It belongs to the H2.0 homeobox family.

The protein resides in the nucleus. In terms of biological role, may function within the midpoint progenitor population to inhibit neuronal differentiation, possibly through modulating the function of Xash3. The polypeptide is Homeobox protein DBX1 (dbx1) (Xenopus laevis (African clawed frog)).